The primary structure comprises 1441 residues: Lysophospholipase NTE1 (1441 aa).

Residues M1 to T22 are Lumenal-facing. A helical transmembrane segment spans residues L23–L43. Topologically, residues R44–I1441 are cytoplasmic. Disordered regions lie at residues S154–D173, T210–I236, Q376–S445, and N551–N585. Over residues Q376–K388 the composition is skewed to polar residues. Positions S572 to N585 are enriched in basic and acidic residues. A nucleoside 3',5'-cyclic phosphate is bound by residues N592–S718 and I707–K836. A PNPLA domain is found at L1137–T1301. Positions G1141–G1146 match the GXGXXG motif. Residues G1168–G1172 carry the GXSXG motif. The active-site Nucleophile is S1170. The Proton acceptor role is filled by D1288. Residues D1288–G1290 carry the DGA/G motif.

The protein belongs to the NTE family.

It localises to the endoplasmic reticulum membrane. The catalysed reaction is a 1-acyl-sn-glycero-3-phosphocholine + H2O = sn-glycerol 3-phosphocholine + a fatty acid + H(+). With respect to regulation, inhibited by organophosphorus esters. In terms of biological role, intracellular phospholipase B that catalyzes the double deacylation of phosphatidylcholine (PC) to glycerophosphocholine (GroPCho). Plays an important role in membrane lipid homeostasis. Responsible for the rapid PC turnover in response to inositol, elevated temperatures, or when choline is present in the growth medium. This is Lysophospholipase NTE1 (NTE1) from Kluyveromyces lactis (strain ATCC 8585 / CBS 2359 / DSM 70799 / NBRC 1267 / NRRL Y-1140 / WM37) (Yeast).